An 820-amino-acid chain; its full sequence is Protein phosphatase 1 regulatory subunit 29 (820 aa).

Residues 1–22 form the signal peptide; that stretch reads MLRLGLCAAALLCVCRPGAVRA. Residues 23 to 397 lie on the Extracellular side of the membrane; it reads DCWLIEGDKG…APSTSTTTHY (375 aa). The N-linked (GlcNAc...) asparagine glycan is linked to asparagine 54. LRR repeat units lie at residues 56–77, 80–101, 104–125, 128–149, and 152–173; these read TVHD…SLNR, NLTD…AFLG, SLQV…MLRG, RLQF…AFSE, and SLIS…TFAS. 3 N-linked (GlcNAc...) asparagine glycosylation sites follow: asparagine 80, asparagine 85, and asparagine 117. In terms of domain architecture, LRRCT spans 185 to 247; sequence NPFNCECDLF…ITVLQAKCRN (63 aa). N-linked (GlcNAc...) asparagine glycans are attached at residues asparagine 205 and asparagine 247. The segment at 250-294 is disordered; it reads LPARPVSHPTPYSTDAQREPDENSGFNPDEILSVEPPASSTTDAS. Residues 292-379 enclose the Fibronectin type-III domain; the sequence is DASAGPAIKL…FNHTCLTFTT (88 aa). Residues 398–418 form a helical membrane-spanning segment; that stretch reads IMTILGCLFGMVIVLGAVYYC. Topologically, residues 419–820 are cytoplasmic; the sequence is LRKRRMQEEK…WKGVSAQQKL (402 aa). 2 disordered regions span residues 508–527 and 589–612; these read GAGG…LENG and SATG…SSHH. Phosphoserine occurs at positions 619, 668, and 672. A disordered region spans residues 654-677; it reads TGLAKGDSKYIEKGSPLNSPLDRL.

Interacts with PPP1CA.

The protein localises to the membrane. Functionally, inhibits phosphatase activity of protein phosphatase 1 (PP1) complexes. The chain is Protein phosphatase 1 regulatory subunit 29 (ELFN2) from Homo sapiens (Human).